A 164-amino-acid chain; its full sequence is NADH-quinone oxidoreductase subunit I (164 aa).

4Fe-4S ferredoxin-type domains are found at residues 54 to 84 (LRRYPNGEERCIACKLCEAICPAQAITIEAG) and 95 to 124 (VRYDIDMVKCIYCGFCQEACPVDAIVEGPN). [4Fe-4S] cluster contacts are provided by cysteine 64, cysteine 67, cysteine 70, cysteine 74, cysteine 104, cysteine 107, cysteine 110, and cysteine 114.

The protein belongs to the complex I 23 kDa subunit family. NDH-1 is composed of 14 different subunits. Subunits NuoA, H, J, K, L, M, N constitute the membrane sector of the complex. [4Fe-4S] cluster serves as cofactor.

It localises to the cell inner membrane. The enzyme catalyses a quinone + NADH + 5 H(+)(in) = a quinol + NAD(+) + 4 H(+)(out). NDH-1 shuttles electrons from NADH, via FMN and iron-sulfur (Fe-S) centers, to quinones in the respiratory chain. The immediate electron acceptor for the enzyme in this species is believed to be ubiquinone. Couples the redox reaction to proton translocation (for every two electrons transferred, four hydrogen ions are translocated across the cytoplasmic membrane), and thus conserves the redox energy in a proton gradient. The sequence is that of NADH-quinone oxidoreductase subunit I from Mesorhizobium japonicum (strain LMG 29417 / CECT 9101 / MAFF 303099) (Mesorhizobium loti (strain MAFF 303099)).